The following is a 394-amino-acid chain: Endothelial cell-selective adhesion molecule (394 aa).

The first 29 residues, 1–29, serve as a signal peptide directing secretion; sequence MILQAGTPETSLLRVLFLGLSTLAAFSRA. Over 30 to 251 the chain is Extracellular; it reads QMELHVPPGL…LDVMTGSKAA (222 aa). The Ig-like V-type domain maps to 37 to 146; the sequence is PGLNKLEAVE…EGKSIGHSIK (110 aa). N-linked (GlcNAc...) asparagine glycans are attached at residues N111, N172, N216, and N239. Positions 159–243 constitute an Ig-like C2-type domain; sequence PSCSLQGVPY…GFAKCNVTLD (85 aa). Cysteines 177 and 227 form a disulfide. Residues 252-272 form a helical membrane-spanning segment; it reads VVAGAVVGTFVGLVLIAGLVL. Residues 273–394 lie on the Cytoplasmic side of the membrane; that stretch reads LYQRRSKTLE…PAQSQAGSLV (122 aa). At S304 the chain carries Phosphoserine. 2 stretches are compositionally biased toward polar residues: residues 304-318 and 335-347; these read SDTI…SVTS and FTPT…QALS. Residues 304–372 form a disordered region; sequence SDTISKNGTL…SLTPGGVSSS (69 aa). A phosphothreonine mark is found at T336 and T338. Phosphoserine occurs at positions 340, 343, 348, and 375.

As to quaternary structure, interacts with MAGI1. As to expression, highly expressed in the heart and lung. Weakly expressed in the kidney and skin. Expression is restricted to the vascular endothelial cells. Expressed in the kidney, heart and tongue (at protein level). Also expressed on megakaryocytes and activated platelets.

The protein localises to the cell junction. Its subcellular location is the adherens junction. The protein resides in the tight junction. It localises to the cell membrane. Can mediate aggregation most likely through a homophilic molecular interaction. This Mus musculus (Mouse) protein is Endothelial cell-selective adhesion molecule (Esam).